A 212-amino-acid chain; its full sequence is MKENIEEAVKKAVSEAPPRGFKESVDLAINLHNIDLTQPGNRVDTEVILPHGRGRPNRIAVFAAGDTALKAKAAGADYVISPEELKLLGENRKNARKLADEYDFFIAETQFMPVIGKTLGPILGKRGKMPTPLPPNADVAQMISRLKNIVRIRSRDRPTFHIAVGRRDMDARQLAENIESVITKLEQTLKDGRRNLKSVYVKTTMGPAVRVI.

The protein belongs to the universal ribosomal protein uL1 family. In terms of assembly, part of the 50S ribosomal subunit.

Binds directly to 23S rRNA. Probably involved in E site tRNA release. Its function is as follows. Protein L1 is also a translational repressor protein, it controls the translation of its operon by binding to its mRNA. This Methanothrix thermoacetophila (strain DSM 6194 / JCM 14653 / NBRC 101360 / PT) (Methanosaeta thermophila) protein is Large ribosomal subunit protein uL1.